Reading from the N-terminus, the 160-residue chain is Large ribosomal subunit protein uL13 (160 aa).

This sequence belongs to the universal ribosomal protein uL13 family. In terms of assembly, part of the 50S ribosomal subunit.

This protein is one of the early assembly proteins of the 50S ribosomal subunit, although it is not seen to bind rRNA by itself. It is important during the early stages of 50S assembly. The chain is Large ribosomal subunit protein uL13 from Orientia tsutsugamushi (strain Boryong) (Rickettsia tsutsugamushi).